Reading from the N-terminus, the 329-residue chain is Peroxidase 56 (329 aa).

The first 31 residues, 1 to 31 (MAALKMTISCFLFLQVIYCLLSSFAPTNVQG), serve as a signal peptide directing secretion. Cystine bridges form between cysteine 41–cysteine 119, cysteine 74–cysteine 79, cysteine 125–cysteine 325, and cysteine 204–cysteine 236. Histidine 72 acts as the Proton acceptor in catalysis. 5 residues coordinate Ca(2+): aspartate 73, valine 76, glycine 78, glutamate 80, and serine 82. The N-linked (GlcNAc...) asparagine glycan is linked to asparagine 158. Proline 167 is a substrate binding site. An N-linked (GlcNAc...) asparagine glycan is attached at asparagine 172. Histidine 197 serves as a coordination point for heme b. Threonine 198 is a Ca(2+) binding site. N-linked (GlcNAc...) asparagine glycosylation occurs at asparagine 213. The Ca(2+) site is built by aspartate 248, serine 251, and aspartate 256.

It belongs to the peroxidase family. Classical plant (class III) peroxidase subfamily. Heme b is required as a cofactor. The cofactor is Ca(2+).

The protein localises to the secreted. The enzyme catalyses 2 a phenolic donor + H2O2 = 2 a phenolic radical donor + 2 H2O. Removal of H(2)O(2), oxidation of toxic reductants, biosynthesis and degradation of lignin, suberization, auxin catabolism, response to environmental stresses such as wounding, pathogen attack and oxidative stress. These functions might be dependent on each isozyme/isoform in each plant tissue. The chain is Peroxidase 56 (PER56) from Arabidopsis thaliana (Mouse-ear cress).